The sequence spans 362 residues: Spermidine/putrescine import ATP-binding protein PotA (362 aa).

An ABC transporter domain is found at 4 to 235 (IKLDHITKQY…PVNDFVARFI (232 aa)). Position 37–44 (37–44 (GPSGSGKT)) interacts with ATP.

The protein belongs to the ABC transporter superfamily. Spermidine/putrescine importer (TC 3.A.1.11.1) family. In terms of assembly, the complex is composed of two ATP-binding proteins (PotA), two transmembrane proteins (PotB and PotC) and a solute-binding protein (PotD).

The protein resides in the cell membrane. It catalyses the reaction ATP + H2O + polyamine-[polyamine-binding protein]Side 1 = ADP + phosphate + polyamineSide 2 + [polyamine-binding protein]Side 1.. Functionally, part of the ABC transporter complex PotABCD involved in spermidine/putrescine import. Responsible for energy coupling to the transport system. This Lactobacillus delbrueckii subsp. bulgaricus (strain ATCC BAA-365 / Lb-18) protein is Spermidine/putrescine import ATP-binding protein PotA.